The following is a 508-amino-acid chain: Transcription termination factor MTERF4, chloroplastic (508 aa).

The transit peptide at Met-1 to Arg-79 directs the protein to the chloroplast. Residues Arg-28 to Pro-49 show a composition bias toward low complexity. Disordered regions lie at residues Arg-28–Arg-69 and Phe-475–Glu-508. The span at Val-484–Glu-508 shows a compositional bias: acidic residues.

The protein belongs to the mTERF family.

Its subcellular location is the plastid. It is found in the chloroplast stroma. In terms of biological role, transcription termination factor required for processing and steady-state levels of plastid transcripts. Required for splicing of the chloroplastic group II intron. Required for the accumulation of 16S and 23S ribosomes. The polypeptide is Transcription termination factor MTERF4, chloroplastic (Oryza sativa subsp. japonica (Rice)).